A 369-amino-acid polypeptide reads, in one-letter code: Anhydro-N-acetylmuramic acid kinase (369 aa).

Gly12–Asp19 provides a ligand contact to ATP.

This sequence belongs to the anhydro-N-acetylmuramic acid kinase family.

It carries out the reaction 1,6-anhydro-N-acetyl-beta-muramate + ATP + H2O = N-acetyl-D-muramate 6-phosphate + ADP + H(+). It functions in the pathway amino-sugar metabolism; 1,6-anhydro-N-acetylmuramate degradation. It participates in cell wall biogenesis; peptidoglycan recycling. In terms of biological role, catalyzes the specific phosphorylation of 1,6-anhydro-N-acetylmuramic acid (anhMurNAc) with the simultaneous cleavage of the 1,6-anhydro ring, generating MurNAc-6-P. Is required for the utilization of anhMurNAc either imported from the medium or derived from its own cell wall murein, and thus plays a role in cell wall recycling. In Shewanella oneidensis (strain ATCC 700550 / JCM 31522 / CIP 106686 / LMG 19005 / NCIMB 14063 / MR-1), this protein is Anhydro-N-acetylmuramic acid kinase.